We begin with the raw amino-acid sequence, 491 residues long: Glutamyl-tRNA(Gln) amidotransferase subunit A (491 aa).

Catalysis depends on charge relay system residues lysine 76 and serine 154. Serine 178 functions as the Acyl-ester intermediate in the catalytic mechanism.

Belongs to the amidase family. GatA subfamily. In terms of assembly, heterotrimer of A, B and C subunits.

It catalyses the reaction L-glutamyl-tRNA(Gln) + L-glutamine + ATP + H2O = L-glutaminyl-tRNA(Gln) + L-glutamate + ADP + phosphate + H(+). Allows the formation of correctly charged Gln-tRNA(Gln) through the transamidation of misacylated Glu-tRNA(Gln) in organisms which lack glutaminyl-tRNA synthetase. The reaction takes place in the presence of glutamine and ATP through an activated gamma-phospho-Glu-tRNA(Gln). The polypeptide is Glutamyl-tRNA(Gln) amidotransferase subunit A (Cereibacter sphaeroides (strain ATCC 17023 / DSM 158 / JCM 6121 / CCUG 31486 / LMG 2827 / NBRC 12203 / NCIMB 8253 / ATH 2.4.1.) (Rhodobacter sphaeroides)).